We begin with the raw amino-acid sequence, 697 residues long: Elongation factor G (697 aa).

The tr-type G domain maps to 8 to 290; sequence ERYRNIGISA…AVLDFLPSPV (283 aa). Residues 17–24, 88–92, and 142–145 contribute to the GTP site; these read AHIDAGKT, DTPGH, and NKMD.

Belongs to the TRAFAC class translation factor GTPase superfamily. Classic translation factor GTPase family. EF-G/EF-2 subfamily.

The protein localises to the cytoplasm. Its function is as follows. Catalyzes the GTP-dependent ribosomal translocation step during translation elongation. During this step, the ribosome changes from the pre-translocational (PRE) to the post-translocational (POST) state as the newly formed A-site-bound peptidyl-tRNA and P-site-bound deacylated tRNA move to the P and E sites, respectively. Catalyzes the coordinated movement of the two tRNA molecules, the mRNA and conformational changes in the ribosome. The chain is Elongation factor G from Methylobacillus flagellatus (strain ATCC 51484 / DSM 6875 / VKM B-1610 / KT).